A 302-amino-acid chain; its full sequence is MAFSTSDEKRIAELLGMSPATLSVRVFGVDLPHDPIPWDSDDEGDDTMPTGSWSERALGVETVARPHVYIGPVGIGAVDDETSDWDSPASPPVTGAERAAGGLPRQAPLLVRRVSGNEWRVVSESERRIEEIGRELARICEIQWDEDVAGAPVGTVTGNSPWSPVRGSLLPPKSGSPTYWNPPPPSPSDDTTCEIPSLPSSLVSSPVNPAPMYSPVSDAPLNTPSPNMMITPTHPGLARLLDTPPTPLDADLGDWAVDWLYAPQLGDQLRIESGSSPGKRPLDDPDEVPSSKRGPSRRALLN.

Disordered regions lie at residues 81-100 (ETSD…ERAA), 155-209 (TVTG…PVNP), and 269-302 (LRIE…ALLN). Residues 196–209 (PSLPSSLVSSPVNP) are compositionally biased toward low complexity.

This is an uncharacterized protein from Ictalurid herpesvirus 1 (strain Auburn) (IcHV-1).